A 429-amino-acid chain; its full sequence is ATP-dependent RNA helicase RhlB (429 aa).

Positions 9-37 match the Q motif motif; sequence DKFAQMGLEPEVLAGLESKGFHYCTPIQA. The Helicase ATP-binding domain maps to 40–219; that stretch reads LPLLVEGHDL…YEHMNHPEHV (180 aa). Residue 53 to 60 participates in ATP binding; it reads AQTGTGKT. The short motif at 165–168 is the DEAD box element; that stretch reads DEAD. A Helicase C-terminal domain is found at 243-390; the sequence is KMLLLLSLME…VSKYDREALL (148 aa). The disordered stretch occupies residues 399–429; it reads VFRNRQPVNRNMRDRQGGGNSNNRRRPPRKS.

The protein belongs to the DEAD box helicase family. RhlB subfamily. As to quaternary structure, component of the RNA degradosome, which is a multiprotein complex involved in RNA processing and mRNA degradation.

It localises to the cytoplasm. The enzyme catalyses ATP + H2O = ADP + phosphate + H(+). Its function is as follows. DEAD-box RNA helicase involved in RNA degradation. Has RNA-dependent ATPase activity and unwinds double-stranded RNA. This Aeromonas hydrophila subsp. hydrophila (strain ATCC 7966 / DSM 30187 / BCRC 13018 / CCUG 14551 / JCM 1027 / KCTC 2358 / NCIMB 9240 / NCTC 8049) protein is ATP-dependent RNA helicase RhlB.